A 303-amino-acid chain; its full sequence is Methionyl-tRNA formyltransferase (303 aa).

110–113 (SLLP) contributes to the (6S)-5,6,7,8-tetrahydrofolate binding site.

It belongs to the Fmt family.

It catalyses the reaction L-methionyl-tRNA(fMet) + (6R)-10-formyltetrahydrofolate = N-formyl-L-methionyl-tRNA(fMet) + (6S)-5,6,7,8-tetrahydrofolate + H(+). Attaches a formyl group to the free amino group of methionyl-tRNA(fMet). The formyl group appears to play a dual role in the initiator identity of N-formylmethionyl-tRNA by promoting its recognition by IF2 and preventing the misappropriation of this tRNA by the elongation apparatus. This chain is Methionyl-tRNA formyltransferase, found in Campylobacter lari (strain RM2100 / D67 / ATCC BAA-1060).